Here is a 238-residue protein sequence, read N- to C-terminus: Neuromodulin (238 aa).

Positions 1-238 (MLCCMRRTKQ…EEPEADQEHA (238 aa)) are disordered. Residues cysteine 3 and cysteine 4 are each lipidated (S-palmitoyl cysteine). Residues 9 to 32 (KQVEKNDDDQKIEQDGIKPEDKAH) show a composition bias toward basic and acidic residues. An IQ domain is found at 31–60 (AHKAATKIQASFRGHITRKKLKGEKKDDVQ). A Phosphoserine; by PHK and PKC modification is found at serine 41. The segment covering 54-83 (EKKDDVQAAEAEANKKDEAPVADGVEKKGE) has biased composition (basic and acidic residues). Over residues 84–95 (GTTTAEAAPATG) the composition is skewed to low complexity. Residues 97–116 (KPDEPGKAGETPSEEKKGEG) show a composition bias toward basic and acidic residues. Low complexity predominate over residues 119-130 (ATEQAAPQAPAS). Over residues 139–154 (ETESATKASTDNSPSS) the composition is skewed to polar residues. Serine 151, serine 153, and serine 154 each carry phosphoserine. Residues 155-167 (KAEDAPAKEEPKQ) are compositionally biased toward basic and acidic residues. The span at 168–199 (ADVPAAVTAAAATTPAAEDAAAKATAQPPTET) shows a compositional bias: low complexity. Threonine 181 bears the Phosphothreonine mark. Phosphoserine; by CK2 is present on residues serine 202 and serine 203. The span at 213–225 (DETKPKESARQDE) shows a compositional bias: basic and acidic residues. Acidic residues predominate over residues 226 to 238 (GKEEEPEADQEHA).

Belongs to the neuromodulin family. As to quaternary structure, identified in a complex containing FGFR4, NCAM1, CDH2, PLCG1, FRS2, SRC, SHC1, GAP43 and CTTN. Interacts (via IQ domain) with calmodulin. Binds calmodulin with a greater affinity in the absence of Ca(2+) than in its presence. In terms of processing, phosphorylated. Phosphorylation of this protein by a protein kinase C is specifically correlated with certain forms of synaptic plasticity. Post-translationally, palmitoylated by ZDHHC3. Palmitoylation is regulated by ARF6 and is essential for plasma membrane association and axonal and dendritic filopodia induction. Deacylated by LYPLA2.

The protein localises to the cell membrane. It localises to the cell projection. The protein resides in the growth cone membrane. It is found in the synapse. Its subcellular location is the filopodium membrane. The protein localises to the perikaryon. It localises to the dendrite. The protein resides in the axon. It is found in the cytoplasm. This protein is associated with nerve growth. It is a major component of the motile 'growth cones' that form the tips of elongating axons. Plays a role in axonal and dendritic filopodia induction. The chain is Neuromodulin (GAP43) from Homo sapiens (Human).